The chain runs to 346 residues: Holliday junction branch migration complex subunit RuvB (346 aa).

Positions 1-182 are large ATPase domain (RuvB-L); the sequence is MKIELLNTPA…FGISSRFDYY (182 aa). Residues Ile21, Arg22, Gly63, Lys66, Thr67, Thr68, 129–131, Arg172, Tyr182, and Arg219 each bind ATP; that span reads EDF. Mg(2+) is bound at residue Thr67. Positions 183–253 are small ATPAse domain (RuvB-S); it reads PPELLERIIL…IAMTTLASLE (71 aa). The segment at 256-346 is head domain (RuvB-H); the sequence is EEGLDDMDKK…GPLFDAAPAR (91 aa). The DNA site is built by Arg311 and Arg316.

Belongs to the RuvB family. As to quaternary structure, homohexamer. Forms an RuvA(8)-RuvB(12)-Holliday junction (HJ) complex. HJ DNA is sandwiched between 2 RuvA tetramers; dsDNA enters through RuvA and exits via RuvB. An RuvB hexamer assembles on each DNA strand where it exits the tetramer. Each RuvB hexamer is contacted by two RuvA subunits (via domain III) on 2 adjacent RuvB subunits; this complex drives branch migration. In the full resolvosome a probable DNA-RuvA(4)-RuvB(12)-RuvC(2) complex forms which resolves the HJ.

Its subcellular location is the cytoplasm. The catalysed reaction is ATP + H2O = ADP + phosphate + H(+). The RuvA-RuvB-RuvC complex processes Holliday junction (HJ) DNA during genetic recombination and DNA repair, while the RuvA-RuvB complex plays an important role in the rescue of blocked DNA replication forks via replication fork reversal (RFR). RuvA specifically binds to HJ cruciform DNA, conferring on it an open structure. The RuvB hexamer acts as an ATP-dependent pump, pulling dsDNA into and through the RuvAB complex. RuvB forms 2 homohexamers on either side of HJ DNA bound by 1 or 2 RuvA tetramers; 4 subunits per hexamer contact DNA at a time. Coordinated motions by a converter formed by DNA-disengaged RuvB subunits stimulates ATP hydrolysis and nucleotide exchange. Immobilization of the converter enables RuvB to convert the ATP-contained energy into a lever motion, pulling 2 nucleotides of DNA out of the RuvA tetramer per ATP hydrolyzed, thus driving DNA branch migration. The RuvB motors rotate together with the DNA substrate, which together with the progressing nucleotide cycle form the mechanistic basis for DNA recombination by continuous HJ branch migration. Branch migration allows RuvC to scan DNA until it finds its consensus sequence, where it cleaves and resolves cruciform DNA. In Chlorobium phaeobacteroides (strain DSM 266 / SMG 266 / 2430), this protein is Holliday junction branch migration complex subunit RuvB.